Consider the following 227-residue polypeptide: MAYPFELGFQDATSPIMEELLHFHDHTLMIVFLISSLVLYIISLMLTTKLTHTSTMDAQEVETIWTILPAIILILIALPSLRILYMMDEINDPSLTVKTMGHQWYWSYEYTDYEDLNFDSYMIPTSDLNPGELRLLEVDNRVVLPMELPIRMLISSEDVLHSWAVPSLGLKTDAIPGRLNQATLTSTRPGLYYGQCSEICGSNHSFMPIVLELVPLKHFENWSSSML.

Over 1-14 the chain is Mitochondrial intermembrane; the sequence is MAYPFELGFQDATS. Residues 15-45 traverse the membrane as a helical segment; the sequence is PIMEELLHFHDHTLMIVFLISSLVLYIISLM. Residues 46 to 59 lie on the Mitochondrial matrix side of the membrane; sequence LTTKLTHTSTMDAQ. The chain crosses the membrane as a helical span at residues 60-87; that stretch reads EVETIWTILPAIILILIALPSLRILYMM. The Mitochondrial intermembrane segment spans residues 88–227; the sequence is DEINDPSLTV…HFENWSSSML (140 aa). Residues His-161, Cys-196, Glu-198, Cys-200, His-204, and Met-207 each contribute to the Cu cation site. Glu-198 serves as a coordination point for Mg(2+).

It belongs to the cytochrome c oxidase subunit 2 family. In terms of assembly, component of the cytochrome c oxidase (complex IV, CIV), a multisubunit enzyme composed of 14 subunits. The complex is composed of a catalytic core of 3 subunits MT-CO1, MT-CO2 and MT-CO3, encoded in the mitochondrial DNA, and 11 supernumerary subunits COX4I, COX5A, COX5B, COX6A, COX6B, COX6C, COX7A, COX7B, COX7C, COX8 and NDUFA4, which are encoded in the nuclear genome. The complex exists as a monomer or a dimer and forms supercomplexes (SCs) in the inner mitochondrial membrane with NADH-ubiquinone oxidoreductase (complex I, CI) and ubiquinol-cytochrome c oxidoreductase (cytochrome b-c1 complex, complex III, CIII), resulting in different assemblies (supercomplex SCI(1)III(2)IV(1) and megacomplex MCI(2)III(2)IV(2)). Found in a complex with TMEM177, COA6, COX18, COX20, SCO1 and SCO2. Interacts with TMEM177 in a COX20-dependent manner. Interacts with COX20. Interacts with COX16. Cu cation serves as cofactor.

Its subcellular location is the mitochondrion inner membrane. The catalysed reaction is 4 Fe(II)-[cytochrome c] + O2 + 8 H(+)(in) = 4 Fe(III)-[cytochrome c] + 2 H2O + 4 H(+)(out). Functionally, component of the cytochrome c oxidase, the last enzyme in the mitochondrial electron transport chain which drives oxidative phosphorylation. The respiratory chain contains 3 multisubunit complexes succinate dehydrogenase (complex II, CII), ubiquinol-cytochrome c oxidoreductase (cytochrome b-c1 complex, complex III, CIII) and cytochrome c oxidase (complex IV, CIV), that cooperate to transfer electrons derived from NADH and succinate to molecular oxygen, creating an electrochemical gradient over the inner membrane that drives transmembrane transport and the ATP synthase. Cytochrome c oxidase is the component of the respiratory chain that catalyzes the reduction of oxygen to water. Electrons originating from reduced cytochrome c in the intermembrane space (IMS) are transferred via the dinuclear copper A center (CU(A)) of subunit 2 and heme A of subunit 1 to the active site in subunit 1, a binuclear center (BNC) formed by heme A3 and copper B (CU(B)). The BNC reduces molecular oxygen to 2 water molecules using 4 electrons from cytochrome c in the IMS and 4 protons from the mitochondrial matrix. The polypeptide is Cytochrome c oxidase subunit 2 (MT-CO2) (Tamias merriami (Merriam's chipmunk)).